The chain runs to 224 residues: Peroxiredoxin-6 (224 aa).

A Thioredoxin domain is found at 5-169 (LLLGDVAPNF…ILRVVISLQL (165 aa)). The interval 31–40 (DSWGILFSHP) is required and sufficient for targeting to lysosomes and lamellar bodies. At Thr44 the chain carries Phosphothreonine. The active-site Cysteine sulfenic acid (-SOH) intermediate; for peroxidase activity is the Cys47. Lys63 is subject to N6-acetyllysine. At Tyr89 the chain carries Phosphotyrosine. The For phospholipase activity role is filled by Asp140. Residue Thr177 is modified to Phosphothreonine; by MAPK. At Lys209 the chain carries N6-acetyllysine; alternate. Lys209 bears the N6-succinyllysine; alternate mark.

Belongs to the peroxiredoxin family. Prx6 subfamily. As to quaternary structure, homodimer. Interacts with GSTP1; mediates PRDX6 glutathionylation and regeneration. Interacts with APEX1. Interacts with STH. May interact with FAM168B. May interact with HTR2A. Irreversibly inactivated by overoxidation of Cys-47 to sulfinic acid (Cys-SO(2)H) and sulfonic acid (Cys-SO(3)H) forms upon oxidative stress. In terms of processing, phosphorylation at Thr-177 by MAP kinases increases the phospholipase activity of the enzyme. The phosphorylated form exhibits a greater lysophosphatidylcholine acyltransferase activity compared to the non-phosphorylated form.

It is found in the cytoplasm. Its subcellular location is the lysosome. It catalyses the reaction a hydroperoxide + 2 glutathione = an alcohol + glutathione disulfide + H2O. The catalysed reaction is a 1,2-diacyl-sn-glycero-3-phosphocholine + H2O = a 1-acyl-sn-glycero-3-phosphocholine + a fatty acid + H(+). The enzyme catalyses a 1-acyl-sn-glycero-3-phosphocholine + an acyl-CoA = a 1,2-diacyl-sn-glycero-3-phosphocholine + CoA. It carries out the reaction 1-hexadecanoyl-sn-glycero-3-phosphocholine + hexadecanoyl-CoA = 1,2-dihexadecanoyl-sn-glycero-3-phosphocholine + CoA. It catalyses the reaction 1,2-dihexadecanoyl-sn-glycero-3-phosphocholine + H2O = 1-hexadecanoyl-sn-glycero-3-phosphocholine + hexadecanoate + H(+). Its function is as follows. Thiol-specific peroxidase that catalyzes the reduction of hydrogen peroxide and organic hydroperoxides to water and alcohols, respectively. Can reduce H(2)O(2) and short chain organic, fatty acid, and phospholipid hydroperoxides. Also has phospholipase activity, and can therefore either reduce the oxidized sn-2 fatty acyl group of phospholipids (peroxidase activity) or hydrolyze the sn-2 ester bond of phospholipids (phospholipase activity). These activities are dependent on binding to phospholipids at acidic pH and to oxidized phospholipds at cytosolic pH. Plays a role in cell protection against oxidative stress by detoxifying peroxides and in phospholipid homeostasis. Exhibits acyl-CoA-dependent lysophospholipid acyltransferase which mediates the conversion of lysophosphatidylcholine (1-acyl-sn-glycero-3-phosphocholine or LPC) into phosphatidylcholine (1,2-diacyl-sn-glycero-3-phosphocholine or PC). Shows a clear preference for LPC as the lysophospholipid and for palmitoyl CoA as the fatty acyl substrate. This chain is Peroxiredoxin-6 (PRDX6), found in Pongo abelii (Sumatran orangutan).